A 116-amino-acid polypeptide reads, in one-letter code: Large ribosomal subunit protein bL19 (116 aa).

Belongs to the bacterial ribosomal protein bL19 family.

In terms of biological role, this protein is located at the 30S-50S ribosomal subunit interface and may play a role in the structure and function of the aminoacyl-tRNA binding site. This chain is Large ribosomal subunit protein bL19, found in Clostridium novyi (strain NT).